A 543-amino-acid polypeptide reads, in one-letter code: Cytochrome P450 2U1 (543 aa).

The next 4 helical transmembrane spans lie at 32 to 52 (PTGGALLLLVLAALLGWSWLW), 58 to 78 (GIPPGPAPWPVVGNFGFVLLP), 261 to 281 (VCLNTQLLLVNICSWLYYLPF), and 342 to 362 (LFYIIGDLFIAGTDTTTNSLL). Cys490 contacts heme. The chain crosses the membrane as a helical span at residues 495–515 (LAKMELFLMFVSLMQSFTFVL).

The protein belongs to the cytochrome P450 family. The cofactor is heme.

Its subcellular location is the endoplasmic reticulum membrane. It localises to the microsome membrane. It is found in the mitochondrion inner membrane. It catalyses the reaction an omega-methyl-long-chain fatty acid + reduced [NADPH--hemoprotein reductase] + O2 = an omega-hydroxy-long-chain fatty acid + oxidized [NADPH--hemoprotein reductase] + H2O + H(+). The catalysed reaction is (5Z,8Z,11Z,14Z)-eicosatetraenoate + reduced [NADPH--hemoprotein reductase] + O2 = 19-hydroxy-(5Z,8Z,11Z,14Z)-eicosatetraenoate + oxidized [NADPH--hemoprotein reductase] + H2O + H(+). The enzyme catalyses (5Z,8Z,11Z,14Z)-eicosatetraenoate + reduced [NADPH--hemoprotein reductase] + O2 = 20-hydroxy-(5Z,8Z,11Z,14Z)-eicosatetraenoate + oxidized [NADPH--hemoprotein reductase] + H2O + H(+). It carries out the reaction N-[(5Z,8Z,11Z,14Z)-eicosatetraenoyl]-serotonin + reduced [NADPH--hemoprotein reductase] + O2 = 2-oxo-N-[(5Z,8Z,11Z,14Z)-eicosatetraenoyl]-serotonin + oxidized [NADPH--hemoprotein reductase] + H2O + H(+). In terms of biological role, a cytochrome P450 monooxygenase involved in the metabolism of arachidonic acid and its conjugates. Mechanistically, uses molecular oxygen inserting one oxygen atom into a substrate, and reducing the second into a water molecule, with two electrons provided by NADPH via cytochrome P450 reductase (CPR; NADPH-ferrihemoprotein reductase). Acts as an omega and omega-1 hydroxylase for arachidonic acid and possibly for other long chain fatty acids. May modulate the arachidonic acid signaling pathway and play a role in other fatty acid signaling processes. May down-regulate the biological activities of N-arachidonoyl-serotonin, an endocannabinoid that has anti-nociceptive effects through inhibition of fatty acid amide hydrolase FAAH, TRPV1 receptor and T-type calcium channels. Catalyzes C-2 oxidation of the indole ring of N-arachidonoyl-serotonin forming a less active product 2-oxo-N-arachidonoyl-serotonin. The protein is Cytochrome P450 2U1 (CYP2U1) of Bos taurus (Bovine).